The primary structure comprises 569 residues: Undecaprenyl phosphate-alpha-4-amino-4-deoxy-L-arabinose arabinosyl transferase 1 (569 aa).

12 consecutive transmembrane segments (helical) span residues 27–47 (GLIL…GLWI), 98–120 (LFGV…YLLA), 129–149 (INAA…QAGY), 151–171 (NLDP…WFAI), 194–214 (LMTK…PYML), 225–245 (YGLV…LAVH), 275–295 (PWWF…LLLP), 311–331 (AYLA…SGKL), 334–354 (YIMP…VKWL), 366–386 (GVFN…LQAT), 396–416 (FSLS…ALQV), and 420–440 (LTLW…LPAA).

Belongs to the glycosyltransferase 83 family.

Its subcellular location is the cell inner membrane. It catalyses the reaction 4-amino-4-deoxy-alpha-L-arabinopyranosyl di-trans,octa-cis-undecaprenyl phosphate + lipid IVA = lipid IIA + di-trans,octa-cis-undecaprenyl phosphate.. Its pathway is lipopolysaccharide metabolism; 4-amino-4-deoxy-beta-L-arabinose-lipid A biosynthesis. Catalyzes the transfer of the L-Ara4N moiety of the glycolipid undecaprenyl phosphate-alpha-L-Ara4N to lipid A. The modified arabinose is attached to lipid A and is required for resistance to polymyxin and cationic antimicrobial peptides. The protein is Undecaprenyl phosphate-alpha-4-amino-4-deoxy-L-arabinose arabinosyl transferase 1 of Pseudomonas fluorescens (strain Pf0-1).